A 1088-amino-acid polypeptide reads, in one-letter code: Tyrocidine synthase 1 (1088 aa).

The 75-residue stretch at 528-602 (PPRTETESIL…QVALFVKSTT (75 aa)) folds into the Carrier domain. Residue S563 is modified to O-(pantetheine 4'-phosphoryl)serine.

The protein belongs to the ATP-dependent AMP-binding enzyme family. Large multienzyme complex of TycA, TycB and TycC. The cofactor is pantetheine 4'-phosphate.

The enzyme catalyses L-phenylalanine + ATP + H2O = D-phenylalanine + AMP + diphosphate + H(+). It participates in antibiotic biosynthesis; tyrocidine biosynthesis. Functionally, in the first step of peptide synthesis this enzyme activates phenylalanine and racemizes it to the D-isomer. In Brevibacillus parabrevis, this protein is Tyrocidine synthase 1 (tycA).